The following is a 162-amino-acid chain: uncharacterized protein (162 aa).

A disordered region spans residues 1–49; the sequence is MNSRTASARGWFSSRPPTSESDLEPATDGPASETTTLSPEATTFNDTRI. A compositionally biased stretch (polar residues) spans 32–46; that stretch reads SETTTLSPEATTFND. Residues 62–82 traverse the membrane as a helical segment; that stretch reads MLLSFGIITVIGLAVALVLYI.

It is found in the membrane. This is an uncharacterized protein from Homo sapiens (Human).